Here is a 244-residue protein sequence, read N- to C-terminus: Inactive chemokine-binding protein (244 aa).

Residues 1–79 (MHVPASLQQS…STSVEDVDPP (79 aa)) are disordered. Over residues 37-53 (QDQTPTNDKICQSVTEI) the composition is skewed to polar residues. Acidic residues predominate over residues 54-77 (TESESDPDPEVESEDDSTSVEDVD).

The protein belongs to the orthopoxvirus OPG001 family.

Its subcellular location is the host cytoplasm. The protein is truncated in this vaccinal strain and presumably inactive, because the lack of signal peptide prevents the protein of being secreted. In the wild-type viruses inhibits host immune defense by binding to host chemokines. Binds host CC chemokines (beta chemokines) such as RANTES with high affinity, but not CXC or C chemokines (alpha and gamma chemokines). The chain is Inactive chemokine-binding protein (OPG001) from Vaccinia virus (strain Western Reserve) (VACV).